Here is a 2017-residue protein sequence, read N- to C-terminus: Protein cbp-1 (2017 aa).

Residues 1 to 13 (MDEPPSKKSRADS) are compositionally biased toward basic and acidic residues. The segment at 1 to 182 (MDEPPSKKSR…PGMFQGDQQQ (182 aa)) is disordered. 2 stretches are compositionally biased toward low complexity: residues 21–30 (ALSALESLEA) and 78–90 (QPGQSQPQQPPQN). The segment covering 106–116 (NPSQTSNNSPR) has biased composition (polar residues). Residues 141-151 (MMSPPSMGRVP) are compositionally biased toward low complexity. Positions 152 to 164 (GPSPGGPQPPGPG) are enriched in pro residues. Low complexity predominate over residues 165 to 182 (QPQMRPGQPGMFQGDQQQ). Symmetric dimethylarginine; by PRMT5; in vitro is present on arginine 234. Residues 307-398 (SNGQPIRGPN…PGSSMLATHQ (92 aa)) are disordered. A compositionally biased stretch (low complexity) spans 340–379 (QAAAAQHAAQQQAAAQAQAQAAAQQQQQQQREQEAAAAAQ). The TAZ-type 1 zinc-finger motif lies at 399–505 (DPEKRKLIQQ…REDCPVCKPL (107 aa)). Disordered stretches follow at residues 558–593 (EGFNGNPFQNGPNRGGPRPPGGNGEIPNLPPPDMPD) and 706–864 (GRSD…DTVF). A compositionally biased stretch (low complexity) spans 559-573 (GFNGNPFQNGPNRGG). Residues 593–672 (DCTKEWHHQV…KIYKIQKELQ (80 aa)) enclose the KIX domain. Residues 721–773 (PSQQNQPWGGAPNSNMHQQIPPNGQVPQVNNSSTFPSSGNSTPNIGASSTVSA) are compositionally biased toward polar residues. The span at 834–854 (KDTKDGVAESKPKEQQAKREP) shows a compositional bias: basic and acidic residues. The region spanning 864–970 (FSQEDLIKFL…EMFVSEMDPV (107 aa)) is the Bromo domain. Interaction with histone stretches follow at residues 902 to 948 (DYHE…YNRK) and 1224 to 1226 (YLD). The 381-residue stretch at 1112 to 1492 (KYLASKLPHN…LAYSLHETDS (381 aa)) folds into the CBP/p300-type HAT domain. Residues 1225–1227 (LDS), 1237–1238 (RT), isoleucine 1284, arginine 1289, and tryptophan 1293 each bind acetyl-CoA. The segment covering 1349–1358 (NEEAQRKVKE) has biased composition (basic and acidic residues). Residues 1349–1401 (NEEAQRKVKEDDDDGEDADGGLGGGDSGKKKSSKNKKNNLKKNAKMNKKKAGS) form a disordered region. A compositionally biased stretch (basic residues) spans 1378–1399 (KKSSKNKKNNLKKNAKMNKKKA). The ZZ-type zinc finger occupies 1494–1540 (GMEYTCNKCSSPAVWHCQSCDDFDLCDGCKPTTQHPHEMEKIKSLIG). The Zn(2+) site is built by cysteine 1499, cysteine 1502, cysteine 1510, cysteine 1513, cysteine 1519, cysteine 1522, histidine 1528, and histidine 1530. The TAZ-type 2 zinc finger occupies 1550–1631 (GGTRYESIQR…ACTVPFCMNI (82 aa)). 2 disordered regions span residues 1656–1828 (GLQS…QPVR) and 1908–2017 (SQMS…AGGQ). The span at 1667–1678 (TPSTVSNGTPSN) shows a compositional bias: polar residues. Low complexity predominate over residues 1699–1708 (QVQMQQHQGS). Over residues 1748–1757 (PQMNANQSRY) the composition is skewed to polar residues. Low complexity-rich tracts occupy residues 1793–1812 (MNPQQQPQQQQGHPGLQNPG) and 1908–1932 (SQMSMGSSNLQNLQQQQLQQQQAGA). A compositionally biased stretch (polar residues) spans 1943–1962 (QNNSQPRAPSGQFASMNPSM). The segment covering 1963-2017 (QQQYPQQQQGWPQQRQQNPGGMQQNANPYNQFQNRQNMMMMPQQQQPHPSNAGGQ) has biased composition (low complexity).

Interacts (via N-terminus domain and HAT domain) with prmt-5; the interaction results in methylation of cbp-1. Interacts (via HAT domain) with cep-1; cep-1 transcriptional activity may be inhibited by interaction with methylated cbp-1. Component of a complex that contains prmt-5 and cbp-1. Methylation by prmt-5 may repress the capacity of cbp-1 to enhance cep-1-dependent transcription of egl-1.

It localises to the nucleus. It carries out the reaction L-lysyl-[protein] + acetyl-CoA = N(6)-acetyl-L-lysyl-[protein] + CoA + H(+). Functionally, acetyltransferase enzyme. Acetylates histones, giving a specific tag for transcriptional activation. May prevent DNA damage-induced apoptosis by inhibiting cep-1-dependent transcription activation of the programmed cell death activator egl-1. In differentiated cells, negatively regulates localization of heterochromatin to the nuclear periphery. Plays a role in migration of gonadal distal tip cells, where it probably modulates expression of genes involved in integrin-mediated adhesion. The chain is Protein cbp-1 (cbp-1) from Caenorhabditis elegans.